The following is a 59-amino-acid chain: Small ribosomal subunit protein bS21 (59 aa).

Positions 39-59 (ETPVEKYKRKQRLKNRTKRRR) are disordered. Residues 45–59 (YKRKQRLKNRTKRRR) are compositionally biased toward basic residues.

It belongs to the bacterial ribosomal protein bS21 family.

This chain is Small ribosomal subunit protein bS21, found in Prochlorococcus marinus (strain SARG / CCMP1375 / SS120).